Here is a 181-residue protein sequence, read N- to C-terminus: MTEEHVVLLDEQDKPSGTLEKYAAHTLNTPLHLAFSCWLFNEDGQLLVTRRSLSKKAWPGVWTNSVCGHPQQGETTEEAIIRRCRFELGVEITDLTPVYPHFSYRATDPNGIVENEVCPVFAARATSVLQVNSEEVMDYQWSEFKSVWKSLLATPWAFSPWMVMQASDEQARERLLDYCQR.

Positions 25 and 32 each coordinate Mn(2+). The Nudix hydrolase domain occupies 30 to 164 (PLHLAFSCWL…PWAFSPWMVM (135 aa)). C67 is an active-site residue. A Mn(2+)-binding site is contributed by H69. E87 is a Mg(2+) binding site. Mn(2+) is bound by residues E114 and E116. Residue E116 is part of the active site.

Belongs to the IPP isomerase type 1 family. In terms of assembly, homodimer. The cofactor is Mg(2+). It depends on Mn(2+) as a cofactor.

It is found in the cytoplasm. The catalysed reaction is isopentenyl diphosphate = dimethylallyl diphosphate. It participates in isoprenoid biosynthesis; dimethylallyl diphosphate biosynthesis; dimethylallyl diphosphate from isopentenyl diphosphate: step 1/1. In terms of biological role, catalyzes the 1,3-allylic rearrangement of the homoallylic substrate isopentenyl (IPP) to its highly electrophilic allylic isomer, dimethylallyl diphosphate (DMAPP). This chain is Isopentenyl-diphosphate Delta-isomerase, found in Salmonella agona (strain SL483).